The chain runs to 181 residues: Ribulose bisphosphate carboxylase small subunit, chloroplastic 6 (181 aa).

The transit peptide at 1 to 57 (MASSIVSSAAVATRSNVAQASMVAPFTGLKSAASFPVTKKNNNVDITSLASNGGRVR) directs the protein to the chloroplast.

This sequence belongs to the RuBisCO small chain family. Heterohexadecamer of 8 large and 8 small subunits.

It is found in the plastid. The protein localises to the chloroplast. Its function is as follows. RuBisCO catalyzes two reactions: the carboxylation of D-ribulose 1,5-bisphosphate, the primary event in carbon dioxide fixation, as well as the oxidative fragmentation of the pentose substrate. Both reactions occur simultaneously and in competition at the same active site. Although the small subunit is not catalytic it is essential for maximal activity. The chain is Ribulose bisphosphate carboxylase small subunit, chloroplastic 6 from Solanum tuberosum (Potato).